Here is a 380-residue protein sequence, read N- to C-terminus: Phospho-N-acetylmuramoyl-pentapeptide-transferase (380 aa).

The next 9 helical transmembrane spans lie at 25-45, 70-90, 98-118, 142-162, 173-193, 209-229, 245-265, 272-294, and 357-377; these read RAAA…PAII, TTPT…VLLW, VLLA…DDYL, VLCG…TLPG, VLVV…VTFI, GLSS…AYVL, GAGE…GFLW, QVFM…AILL, and QVVV…LSTL.

Belongs to the glycosyltransferase 4 family. MraY subfamily. Requires Mg(2+) as cofactor.

The protein resides in the cell inner membrane. The catalysed reaction is UDP-N-acetyl-alpha-D-muramoyl-L-alanyl-gamma-D-glutamyl-meso-2,6-diaminopimeloyl-D-alanyl-D-alanine + di-trans,octa-cis-undecaprenyl phosphate = di-trans,octa-cis-undecaprenyl diphospho-N-acetyl-alpha-D-muramoyl-L-alanyl-D-glutamyl-meso-2,6-diaminopimeloyl-D-alanyl-D-alanine + UMP. It participates in cell wall biogenesis; peptidoglycan biosynthesis. In terms of biological role, catalyzes the initial step of the lipid cycle reactions in the biosynthesis of the cell wall peptidoglycan: transfers peptidoglycan precursor phospho-MurNAc-pentapeptide from UDP-MurNAc-pentapeptide onto the lipid carrier undecaprenyl phosphate, yielding undecaprenyl-pyrophosphoryl-MurNAc-pentapeptide, known as lipid I. This chain is Phospho-N-acetylmuramoyl-pentapeptide-transferase, found in Gemmatimonas aurantiaca (strain DSM 14586 / JCM 11422 / NBRC 100505 / T-27).